A 402-amino-acid polypeptide reads, in one-letter code: Probable tRNA sulfurtransferase (402 aa).

The THUMP domain maps to 61 to 166 (EEIMKRISKV…SDAAYLYSRV (106 aa)). Residues 184–185 (ML), 209–210 (HF), R266, G288, and Q297 contribute to the ATP site.

It belongs to the ThiI family.

The protein localises to the cytoplasm. It carries out the reaction [ThiI sulfur-carrier protein]-S-sulfanyl-L-cysteine + a uridine in tRNA + 2 reduced [2Fe-2S]-[ferredoxin] + ATP + H(+) = [ThiI sulfur-carrier protein]-L-cysteine + a 4-thiouridine in tRNA + 2 oxidized [2Fe-2S]-[ferredoxin] + AMP + diphosphate. The catalysed reaction is [ThiS sulfur-carrier protein]-C-terminal Gly-Gly-AMP + S-sulfanyl-L-cysteinyl-[cysteine desulfurase] + AH2 = [ThiS sulfur-carrier protein]-C-terminal-Gly-aminoethanethioate + L-cysteinyl-[cysteine desulfurase] + A + AMP + 2 H(+). The protein operates within cofactor biosynthesis; thiamine diphosphate biosynthesis. Its function is as follows. Catalyzes the ATP-dependent transfer of a sulfur to tRNA to produce 4-thiouridine in position 8 of tRNAs, which functions as a near-UV photosensor. Also catalyzes the transfer of sulfur to the sulfur carrier protein ThiS, forming ThiS-thiocarboxylate. This is a step in the synthesis of thiazole, in the thiamine biosynthesis pathway. The sulfur is donated as persulfide by IscS. In Macrococcus caseolyticus (strain JCSC5402) (Macrococcoides caseolyticum), this protein is Probable tRNA sulfurtransferase.